The primary structure comprises 320 residues: Protein rlx (320 aa).

Its function is as follows. This protein is probably required for relaxation complex formation and plasmid mobilization by conjugative plasmids. This chain is Protein rlx (rlx), found in Staphylococcus aureus.